Reading from the N-terminus, the 134-residue chain is Translation initiation factor 2 subunit beta (134 aa).

Over residues M1–E12 the composition is skewed to basic and acidic residues. The tract at residues M1–D28 is disordered.

The protein belongs to the eIF-2-beta/eIF-5 family. Heterotrimer composed of an alpha, a beta and a gamma chain.

In terms of biological role, eIF-2 functions in the early steps of protein synthesis by forming a ternary complex with GTP and initiator tRNA. The sequence is that of Translation initiation factor 2 subunit beta from Haloarcula marismortui (strain ATCC 43049 / DSM 3752 / JCM 8966 / VKM B-1809) (Halobacterium marismortui).